Reading from the N-terminus, the 633-residue chain is MATSSSDRWPIPLKQHIPTLIFITVTVLTSNLVSRTQPTAYLDEIFHIPQAQQFCSALSSTSLFSAQQVWRQLTSVRYDAQLTTPPGMYAISVGMAKVLPGWECKDVVWLRSTNLVLLLTLPVLVARILGQIEEQARIASAAEDYSPSKTITQNLGKEITRHEIEMLQAKAKLQLPPTPSASHDDLAHIEPPTISIAQAALPAPTGSAAPLLRALKQREASAYTMALACTICFLPPLWFFGFLYYTDLASTWLVLAMLSLYNDLNTSNAHVAPTITGLLIALTSILAVAVRQTNIVWIGFAAAQATLSRVGKHVSHTQQGSDPVTQAIGMVKGAFGDNKKGWWTAVAINAAPMVPVLAVCVLFLRWNGSIVLGEKAAHQVALHLPQMGYFVAFALGFGLFPLLFSLQSMSHKAQDQGPSSSTLATFTHSVRSAVSALIDSTIASPGCILALAAALAGFYIAVDRFTIEHAYMLADNRHYTFYIWRKYRSSYAIPALDGMTIEPKLAVVPLFALALIAWSRALTHHAVNKRTGALFSLLFWMATAAVLVPTPLIEPRYFLMAYLLLRIYSHPYAPCEKQEKSAQLKWIYLALEAATYAAVNVITVGLFVNRPFQWPSHAVDVSRNEHTTMRFLW.

The next 4 helical transmembrane spans lie at Trp9–Thr29, Ser112–Ile132, Pro192–Leu212, and Met225–Tyr245. Asn265 carries N-linked (GlcNAc...) asparagine glycosylation. Helical transmembrane passes span His270 to Val290 and Thr344 to Leu364. An N-linked (GlcNAc...) asparagine glycan is attached at Asn367. 5 consecutive transmembrane segments (helical) span residues Leu384–Phe404, Ile442–Val462, Gly498–Trp518, Ala533–Ile553, and Ile587–Phe607.

The protein belongs to the ALG10 glucosyltransferase family.

The protein resides in the endoplasmic reticulum membrane. The catalysed reaction is an alpha-D-Glc-(1-&gt;3)-alpha-D-Glc-(1-&gt;3)-alpha-D-Man-(1-&gt;2)-alpha-D-Man-(1-&gt;2)-alpha-D-Man-(1-&gt;3)-[alpha-D-Man-(1-&gt;2)-alpha-D-Man-(1-&gt;3)-[alpha-D-Man-(1-&gt;2)-alpha-D-Man-(1-&gt;6)]-alpha-D-Man-(1-&gt;6)]-beta-D-Man-(1-&gt;4)-beta-D-GlcNAc-(1-&gt;4)-alpha-D-GlcNAc-diphospho-di-trans,poly-cis-dolichol + a di-trans,poly-cis-dolichyl beta-D-glucosyl phosphate = a alpha-D-Glc-(1-&gt;2)-alpha-D-Glc-(1-&gt;3)-alpha-D-Glc-(1-&gt;3)-alpha-D-Man-(1-&gt;2)-alpha-D-Man-(1-&gt;2)-alpha-D-Man-(1-&gt;3)-[alpha-D-Man-(1-&gt;2)-alpha-D-Man-(1-&gt;3)-[alpha-D-Man-(1-&gt;2)-alpha-D-Man-(1-&gt;6)]-alpha-D-Man-(1-&gt;6)]-beta-D-Man-(1-&gt;4)-beta-D-GlcNAc-(1-&gt;4)-alpha-D-GlcNAc-diphospho-di-trans,poly-cis-dolichol + a di-trans,poly-cis-dolichyl phosphate + H(+). The protein operates within protein modification; protein glycosylation. Its function is as follows. Dol-P-Glc:Glc(2)Man(9)GlcNAc(2)-PP-Dol alpha-1,2-glucosyltransferase that operates in the biosynthetic pathway of dolichol-linked oligosaccharides, the glycan precursors employed in protein asparagine (N)-glycosylation. The assembly of dolichol-linked oligosaccharides begins on the cytosolic side of the endoplasmic reticulum membrane and finishes in its lumen. The sequential addition of sugars to dolichol pyrophosphate produces dolichol-linked oligosaccharides containing fourteen sugars, including two GlcNAcs, nine mannoses and three glucoses. Once assembled, the oligosaccharide is transferred from the lipid to nascent proteins by oligosaccharyltransferases. In the lumen of the endoplasmic reticulum, adds the third and last glucose residue from dolichyl phosphate glucose (Dol-P-Glc) onto the lipid-linked oligosaccharide intermediate Glc(2)Man(9)GlcNAc(2)-PP-Dol to produce Glc(3)Man(9)GlcNAc(2)-PP-Dol. This Mycosarcoma maydis (Corn smut fungus) protein is Dol-P-Glc:Glc(2)Man(9)GlcNAc(2)-PP-Dol alpha-1,2-glucosyltransferase (ALG10).